Consider the following 208-residue polypeptide: Small ribosomal subunit protein uS3 (208 aa).

In terms of domain architecture, KH type-2 spans 16 to 85; sequence VDEYLKNKLP…KPQIEVKQIE (70 aa).

Belongs to the universal ribosomal protein uS3 family. In terms of assembly, part of the 30S ribosomal subunit.

Functionally, binds the lower part of the 30S subunit head. This chain is Small ribosomal subunit protein uS3, found in Methanococcus aeolicus (strain ATCC BAA-1280 / DSM 17508 / OCM 812 / Nankai-3).